Reading from the N-terminus, the 2273-residue chain is MRILFLTTFMSKGNKVVRYLESLHHEVVICQEKVHAQSANLQEIDWIVSYAYGYILDKEIVSRFRGRIINLHPSLLPWNKGRDPVFWSVWDETPKGVTIHLIDEHVDTGDILVQEEIAFADEDTLLDCYNKANQAIEELFIREWENIVHGRIAPYRQTAGGTLHFKADRDFYKNLNMTTVRELLALKRLCAEPKRGEKPIDKTFHQLFEQQVEMTPDHVAVVDRGQSLTYKQLNERANQLAHHLRGKGVKPDDQVAIMLDKSLDMIVSILAVMKAGGAYVPIDPDYPGERIAYMLADSSAAILLTNALHEEKANGACDIIDVHDPDSYSENTNNLPHVNRPDDLVYVMYTSGSTGLAKGVMIEHHNLVNFCEWYRPYFGVTPADKALVYSSFSFDGSALDIFTHLLAGAALHIVPSERKYDLDALNDYCNQEGITISYLPTGAAEQFMQMDNQSFRVVITGGDVLKKIERNGTYKLYNGYGPTECTIMVTMFEVDKPYANIPIGKPIDRTRILILDEALALQPIGVAGELFIVGEGLGRGYLNRPELTAEKFIVHPQTGERMYRTGDRARFLPDGNIEFLGRLDNLVKIRGYRIEPGEIEPFLMNHPLIELTTVLAKEQADGRKYLVGYYVAPEEIPHGELREWLGNDLPDYMIPTYFVHMKAFPLTANGKVDRRALPDVQADAELLGEDYVAPTDELEQQLAQVWSHVLGIPQMGIDDHFLERGGDSIKVMQLIHQLKNIGLSLRYDQLFTHPTIRQLKRLLTEQKQVSLEPLRELDEQAEYETSAVEKRMYIIQQQDVESIAYNVVYTINFPLTVDTEQIRVALEQLVLRHEGLRSTYHMRGDEIVKRIVPRAELSFVRQTGEEESVQSLLAEQIKPFDLAKAPLLRAGVIETADKKVLWFDSHHILLDGLSKSILARELQALLGQQVLSPVEKTYKSFARWQNEWFASDEYEQQIAYWKTLLQGELPAVQLPTKKRPPQLTFDGAIQMYRVNPEITRKLKATAAKHDLTLYMLMLTIVSIWLSKMNSDSNQVILGTVTDGRQHPDTRELLGMFVNTLPLLLSIDHEESFLHNLQQVKAKLLPALQNQYVPFDKILEAARVKREGNRHPLFDVMFMMQGAPETELESNMHHINAGISKFDLTLEVLERENGLNIVFEYNTHLFDEGMILRMVAQFEHLLLQAVHGLDQQVKRFELVTEDEKRDLFLRVNDTAKAYPNKLIMSMLEDWAAATPDKTALVFREQRVTYRELNERVNQLAHTLREKGVQPDDLVMLMAERSVEMMVAIFAVLKAGGAYLPIDPHSPAERIAYIFADSGAKLVLAQSPFVEKASMAEVVLDLNSASSYAADTSNPPLVNQPGDLVYVMYTSGSTGKPKGVMIEHGALLNVLHGMQDEYPLLQDDAFLLKTTYIFDISVAEIFGWVPGRGKLVILEPEAEKNPKAIWQAVVGAGITHINFVPSMLIPFVEYLEGRTEANRLRYILACGEAMPDELVPKVYEVLPEVKLENIYGPTEATIYASRYSLAKGSQESPVPIGKPLPNYRMYIINRHGQLQPIGVPGELCIAGASLARGYLNNPALTEEKFTPHPLEKGERIYRTGDLARYREDGNIEYLGRMDHQVKIRGYRIELDEIRSKLIQEETIQDAVVVARNDQNGQAYLCAYLLSEQEWTVGQLRELLRRELPEYMIPAHFVLLKQFPLTANGKLDRKALPEPDGSVKAEAEYAAPRTELEATLAHIWGEVLGIERIGIRDNFFELGGDSIKGLQIASRLQRINWTMVINHLFLYPTIEQIAPFVTSEQVVIEQGLVEGLVKLTPIQRDFFERITADRHHWNQARMLFCRDGLEREWVVETLNALVLQHDALRMRFRETEQGIVQFHQGNEGKLFGFHVFDCTEELDIAKKVEEQANVLQSGMNLQEGPLVQAALFMTRTGDHLLLAIHQLVVDEASWRIILEDFQTAYKQKAAGEPIALPNKTHSYQSWAEELHNAANSKKLTSELGYWRKIASSPTRPLPQDQEPLSRTEQSTATAAIRFAKAETANLLHEANHAYQTEAQELLLAALGMALRDWTRADDVTVFLEKDGRESAAKGLDVSRTVGWFHSLFPVVLSAARSGDPGEQIKQVKEMLRAIPHQGSGYSILKQLTDLRHKHPDDFTLQPKIVVHAWEQLDAGLETDWLTLSHLPQGSVRGANAERMQQLDVFSKISNGELTIHIQYHRDEYRKATIDKLLELYQAHLNALLAHCLQKTETELTPSDFVDKNLSRSELDDIMDLISDL.

The GART stretch occupies residues Met-1–Trp-144. 2 consecutive Carrier domains span residues Ala-693–Lys-767 and Ala-1724–Gln-1798. O-(pantetheine 4'-phosphoryl)serine occurs at positions 728 and 1759.

It belongs to the ATP-dependent AMP-binding enzyme family. In terms of assembly, large multienzyme complex composed of 4 subunits; LgrA, LgrB, LgrC and LgrD. Requires pantetheine 4'-phosphate as cofactor.

Activates valine (or leucine, but much less frequently), and then glycine and catalyzes the formation of the peptide bond in the first step of peptide synthesis. This enzyme may also play a role in N-formylation of the first amino acid residue in the synthesized dipeptide. The sequence is that of Linear gramicidin synthase subunit A (lgrA) from Brevibacillus parabrevis.